Here is a 158-residue protein sequence, read N- to C-terminus: Transcriptional regulator MraZ (158 aa).

SpoVT-AbrB domains are found at residues 5 to 52 (IYET…TFSS) and 91 to 134 (AVEC…SQAE).

It belongs to the MraZ family. Forms oligomers.

It is found in the cytoplasm. The protein resides in the nucleoid. The polypeptide is Transcriptional regulator MraZ (Geobacter sulfurreducens (strain ATCC 51573 / DSM 12127 / PCA)).